The sequence spans 2053 residues: Nonribosomal peptide synthetase pboA (2053 aa).

Residues 16–402 (ACRDNADRPA…GRRDRVAKVR (387 aa)) are adenylation 1. The Carrier 1 domain maps to 503–579 (RSYASVDEVI…HLITVCRERR (77 aa)). S540 is subject to O-(pantetheine 4'-phosphoryl)serine. The segment at 611–896 (NDPSLYCVKH…LLQSVHRTVQ (286 aa)) is condensation 1. Residues 1034–1418 (SAAARNPTNI…GRRDRQVKLR (385 aa)) form an adenylation 2 region. The Carrier 2 domain occupies 1515–1593 (VPDTSVKKII…DIVALVEGKI (79 aa)). S1553 is subject to O-(pantetheine 4'-phosphoryl)serine. The interval 1630 to 1981 (NSQCQSGFNV…LQLRLEYDSD (352 aa)) is condensation 2.

The protein belongs to the NRP synthetase family. The cofactor is pantetheine 4'-phosphate.

It participates in secondary metabolite biosynthesis. Its function is as follows. Nonribosomal peptide synthetase; part of the gene cluster that mediates the biosynthesis of protubonine B, a hydroxylated and diacetylated cyclo-L-Trp-L-Leu derivative. The first step of the protubonine B synthesis is performed by the nonribosomal peptide synthetase pboA that catalyzes the formation of cyclo-L-Trp-L-Leu by condensing L-Leu with L-Trp. The flavin-dependent monooxygenase pboD is responsible for hydroxylation at C-3 of the indole ring and subsequent formation of the pyrrolidine ring, leadind to protubonine D. Protubonine D is further diacetylated by two acetyltransferases, pboB and pboC, to form the final product protubonine B via protubonine C. In Aspergillus ustus, this protein is Nonribosomal peptide synthetase pboA.